Here is an 87-residue protein sequence, read N- to C-terminus: Small ribosomal subunit protein bS20 (87 aa).

It belongs to the bacterial ribosomal protein bS20 family.

Its function is as follows. Binds directly to 16S ribosomal RNA. The chain is Small ribosomal subunit protein bS20 from Finegoldia magna (strain ATCC 29328 / DSM 20472 / WAL 2508) (Peptostreptococcus magnus).